Reading from the N-terminus, the 105-residue chain is Ribonuclease P protein component 4 (105 aa).

Zn(2+) is bound by residues cysteine 63, cysteine 66, cysteine 89, and cysteine 92.

Belongs to the eukaryotic/archaeal RNase P protein component 4 family. As to quaternary structure, consists of a catalytic RNA component and at least 4-5 protein subunits. Zn(2+) is required as a cofactor.

The protein localises to the cytoplasm. The enzyme catalyses Endonucleolytic cleavage of RNA, removing 5'-extranucleotides from tRNA precursor.. Part of ribonuclease P, a protein complex that generates mature tRNA molecules by cleaving their 5'-ends. This is Ribonuclease P protein component 4 from Methanoculleus marisnigri (strain ATCC 35101 / DSM 1498 / JR1).